We begin with the raw amino-acid sequence, 231 residues long: Uracil-DNA glycosylase (231 aa).

D74 acts as the Proton acceptor in catalysis.

The protein belongs to the uracil-DNA glycosylase (UDG) superfamily. UNG family.

The protein localises to the cytoplasm. The catalysed reaction is Hydrolyzes single-stranded DNA or mismatched double-stranded DNA and polynucleotides, releasing free uracil.. Excises uracil residues from the DNA which can arise as a result of misincorporation of dUMP residues by DNA polymerase or due to deamination of cytosine. The sequence is that of Uracil-DNA glycosylase from Campylobacter jejuni (strain RM1221).